Here is a 131-residue protein sequence, read N- to C-terminus: D-ribose pyranase (131 aa).

The active-site Proton donor is the His20. Substrate-binding positions include Asp28, His98, and 120-122 (FSN).

Belongs to the RbsD / FucU family. RbsD subfamily. As to quaternary structure, homodecamer.

The protein localises to the cytoplasm. It carries out the reaction beta-D-ribopyranose = beta-D-ribofuranose. The protein operates within carbohydrate metabolism; D-ribose degradation; D-ribose 5-phosphate from beta-D-ribopyranose: step 1/2. Functionally, catalyzes the interconversion of beta-pyran and beta-furan forms of D-ribose. The polypeptide is D-ribose pyranase (Levilactobacillus brevis (strain ATCC 367 / BCRC 12310 / CIP 105137 / JCM 1170 / LMG 11437 / NCIMB 947 / NCTC 947) (Lactobacillus brevis)).